The sequence spans 508 residues: Putative inorganic phosphate transporter 1-13 (508 aa).

The Cytoplasmic segment spans residues Met1–His22. The chain crosses the membrane as a helical span at residues Phe23–Ile43. Topologically, residues Ser44–His64 are extracellular. A helical membrane pass occupies residues Ala65 to Leu85. Topologically, residues Gly86 to Arg93 are cytoplasmic. A helical membrane pass occupies residues Val94–Ser114. Over Lys115–Glu117 the chain is Extracellular. A helical membrane pass occupies residues Gly118–Gly138. Residues Asp139–Phe159 lie on the Cytoplasmic side of the membrane. Residues Ile160 to Ile180 form a helical membrane-spanning segment. The Extracellular portion of the chain corresponds to Val181–Lys192. Residues Ile193–His213 form a helical membrane-spanning segment. Topologically, residues Trp214–His277 are cytoplasmic. Residues Leu278 to Phe298 traverse the membrane as a helical segment. Over Met299–Ala328 the chain is Extracellular. The helical transmembrane segment at Val329–Val349 threads the bilayer. Over Asp350–Arg354 the chain is Cytoplasmic. Residues Val355 to Pro375 form a helical membrane-spanning segment. Topologically, residues Tyr376 to Ala389 are extracellular. A helical transmembrane segment spans residues Val390–Ile410. The Cytoplasmic segment spans residues Pro411 to His424. Residues Gly425–Thr445 form a helical membrane-spanning segment. The Extracellular portion of the chain corresponds to Glu446 to Arg450. Residues Ile451 to Pro471 traverse the membrane as a helical segment. Over Glu472–Leu508 the chain is Cytoplasmic.

Belongs to the major facilitator superfamily. Phosphate:H(+) symporter (TC 2.A.1.9) family.

It localises to the membrane. High-affinity transporter for external inorganic phosphate. In Oryza sativa subsp. japonica (Rice), this protein is Putative inorganic phosphate transporter 1-13 (PHT1-13).